The following is a 140-amino-acid chain: Lysozyme E (140 aa).

The first 18 residues, 1-18 (MKAFIVLVALAMAAPALG), serve as a signal peptide directing secretion. One can recognise a C-type lysozyme domain in the interval 19–140 (RTLDRCSLAR…GWLPSIDGCF (122 aa)). Intrachain disulfides connect Cys-24–Cys-139, Cys-45–Cys-129, Cys-80–Cys-96, and Cys-92–Cys-110. Residues Glu-50 and Asp-68 contribute to the active site.

This sequence belongs to the glycosyl hydrolase 22 family. Found in the midgut.

It catalyses the reaction Hydrolysis of (1-&gt;4)-beta-linkages between N-acetylmuramic acid and N-acetyl-D-glucosamine residues in a peptidoglycan and between N-acetyl-D-glucosamine residues in chitodextrins.. Its function is as follows. Unlikely to play an active role in the humoral immune defense. May have a function in the digestion of bacteria in the food. The protein is Lysozyme E (LysE) of Drosophila melanogaster (Fruit fly).